Reading from the N-terminus, the 325-residue chain is NADH-quinone oxidoreductase subunit H (325 aa).

8 helical membrane passes run 11-31, 81-101, 114-134, 149-169, 186-206, 237-257, 265-285, and 304-324; these read VLIA…CGAL, MIFT…FAIV, IGIL…LFAG, ASAQ…GVVA, MWNV…GVAV, FFVG…TMFF, LPPF…FILI, and ICLP…LYNA.

Belongs to the complex I subunit 1 family. As to quaternary structure, NDH-1 is composed of 13 different subunits. Subunits NuoA, H, J, K, L, M, N constitute the membrane sector of the complex.

The protein resides in the cell inner membrane. It carries out the reaction a quinone + NADH + 5 H(+)(in) = a quinol + NAD(+) + 4 H(+)(out). Its function is as follows. NDH-1 shuttles electrons from NADH, via FMN and iron-sulfur (Fe-S) centers, to quinones in the respiratory chain. The immediate electron acceptor for the enzyme in this species is believed to be ubiquinone. Couples the redox reaction to proton translocation (for every two electrons transferred, four hydrogen ions are translocated across the cytoplasmic membrane), and thus conserves the redox energy in a proton gradient. This subunit may bind ubiquinone. This chain is NADH-quinone oxidoreductase subunit H, found in Photorhabdus laumondii subsp. laumondii (strain DSM 15139 / CIP 105565 / TT01) (Photorhabdus luminescens subsp. laumondii).